We begin with the raw amino-acid sequence, 206 residues long: N-(5'-phosphoribosyl)anthranilate isomerase (206 aa).

Belongs to the TrpF family.

The enzyme catalyses N-(5-phospho-beta-D-ribosyl)anthranilate = 1-(2-carboxyphenylamino)-1-deoxy-D-ribulose 5-phosphate. The protein operates within amino-acid biosynthesis; L-tryptophan biosynthesis; L-tryptophan from chorismate: step 3/5. The protein is N-(5'-phosphoribosyl)anthranilate isomerase of Nitrosococcus oceani (strain ATCC 19707 / BCRC 17464 / JCM 30415 / NCIMB 11848 / C-107).